Consider the following 462-residue polypeptide: 2-(3-amino-3-carboxypropyl)histidine synthase subunit 1 (462 aa).

Residues 1-87 (MEEDRRQTDL…AVATAKPRRA (87 aa)) are disordered. A compositionally biased stretch (polar residues) spans 35-44 (ESAAQTQNGA). Residues Cys173, Cys276, and Cys406 each contribute to the [4Fe-4S] cluster site.

This sequence belongs to the DPH1/DPH2 family. DPH1 subfamily. Component of the 2-(3-amino-3-carboxypropyl)histidine synthase complex composed of DPH1, DPH2, DPH3 and a NADH-dependent reductase, predominantly CBR1. The cofactor is [4Fe-4S] cluster.

Its subcellular location is the cytoplasm. The enzyme catalyses L-histidyl-[translation elongation factor 2] + S-adenosyl-L-methionine = 2-[(3S)-amino-3-carboxypropyl]-L-histidyl-[translation elongation factor 2] + S-methyl-5'-thioadenosine + H(+). Its pathway is protein modification; peptidyl-diphthamide biosynthesis. Catalyzes the first step of diphthamide biosynthesis, a post-translational modification of histidine which occurs in elongation factor 2. DPH1 and DPH2 transfer a 3-amino-3-carboxypropyl (ACP) group from S-adenosyl-L-methionine (SAM) to a histidine residue, the reaction is assisted by a reduction system comprising DPH3 and a NADH-dependent reductase, predominantly CBR1. This is 2-(3-amino-3-carboxypropyl)histidine synthase subunit 1 (DPH1) from Gibberella zeae (strain ATCC MYA-4620 / CBS 123657 / FGSC 9075 / NRRL 31084 / PH-1) (Wheat head blight fungus).